We begin with the raw amino-acid sequence, 320 residues long: Malate dehydrogenase (320 aa).

NAD(+) is bound by residues 10 to 15 and aspartate 34; that span reads GAGMIG. Substrate is bound by residues arginine 83 and arginine 89. NAD(+) contacts are provided by residues asparagine 96 and 119–121; that span reads ITN. 2 residues coordinate substrate: asparagine 121 and arginine 152. Histidine 176 (proton acceptor) is an active-site residue.

Belongs to the LDH/MDH superfamily. MDH type 3 family.

The enzyme catalyses (S)-malate + NAD(+) = oxaloacetate + NADH + H(+). Catalyzes the reversible oxidation of malate to oxaloacetate. The chain is Malate dehydrogenase from Caulobacter vibrioides (strain NA1000 / CB15N) (Caulobacter crescentus).